Reading from the N-terminus, the 492-residue chain is Glutamyl-tRNA(Gln) amidotransferase subunit A (492 aa).

Residues K78 and S158 each act as charge relay system in the active site. S182 functions as the Acyl-ester intermediate in the catalytic mechanism.

This sequence belongs to the amidase family. GatA subfamily. In terms of assembly, heterotrimer of A, B and C subunits.

The enzyme catalyses L-glutamyl-tRNA(Gln) + L-glutamine + ATP + H2O = L-glutaminyl-tRNA(Gln) + L-glutamate + ADP + phosphate + H(+). Allows the formation of correctly charged Gln-tRNA(Gln) through the transamidation of misacylated Glu-tRNA(Gln) in organisms which lack glutaminyl-tRNA synthetase. The reaction takes place in the presence of glutamine and ATP through an activated gamma-phospho-Glu-tRNA(Gln). The protein is Glutamyl-tRNA(Gln) amidotransferase subunit A of Rhodopseudomonas palustris (strain ATCC BAA-98 / CGA009).